Reading from the N-terminus, the 701-residue chain is MRSSEGAPSWAVALPPPLRPCAYGVSEVTRCWHQLSLGAGESSMNPSATLYRRQNIGSEVETSTIEKQRKELQLLIGELKDRDKELNDMVAVHQRQLLSWEEDRQKVLTLEERCSKLEGELHKRTDIIKSLMKKVKTLESNQAECQTALQKTQQQLQEMAQKATHSTLLSEDLEARNENLSSTLVDLSAQVGQLQAREQALTTMIKLKDKDIIEAVNHISDCSGKFKLLEHALRDAKMAETCVVREKQDYKQKLKALRIEVNKLKEDLNEKTTENNEQREEIIRLKQEKSCLHDELIFTVEREKRKDELLDIAKSKQDRTNSELQNLRQIYVKQQSDLQFLNFNIESSQELIQIHGLKMEEPKALECSKDMCLSDLDNNYPKIDIKRERNQKSLVKDQTFEVMLAQHNGSDKSSCDACREKKLQVNTALGEKSVIALSSLFTKDLLDKQKSWSLGGKIQTEPENKVTLCKVHAKSPKCDGVGLPTEEKQLSETSVSLSDEKQWHDINVYLGLSSCSKQPDRLDGDGHDRTGTSEVSCCTPNVVCIGDNDLSESKCCHPSNIIIEAPGHMTDTEWMNIFKPSRAQRIVRHKTMCTCSRSVSAMKYNSSASELIGMQPSQCVGSLKSAEREEESAALPDRRTSANEKDDFSPTSKLQRLLAESRQMVTDLELSTLLPISCENLNRSKLEVSEEPDEKTTLVSH.

Coiled coils occupy residues 61–197 (ETST…LQAR) and 241–342 (TCVV…QFLN). The tract at residues 624-652 (KSAEREEESAALPDRRTSANEKDDFSPTS) is disordered. Basic and acidic residues predominate over residues 636–648 (PDRRTSANEKDDF). Short sequence motifs (LXXLL motif) lie at residues 654–658 (LQRLL) and 670–674 (LSTLL).

As to quaternary structure, interacts with ESR1 and ESR2 in the presence of estradiol/E2. The interaction with ESR2 recruits CCDC62 to ER target genes, including cyclin-D1/CCND1 AP-1 promoter. Interacts with GOPC. As to expression, highly expressed in testis, not detected in other tissues (at protein level). Expressed at low levels in the epididymis, lung, spleen, bladder, kidney, liver, muscle.

It localises to the cytoplasm. Its subcellular location is the nucleus. The protein localises to the cytoplasmic vesicle. It is found in the secretory vesicle. The protein resides in the acrosome. Functionally, nuclear receptor coactivator that can enhance preferentially estrogen receptors ESR1 and ESR2 transactivation. Also modulates progesterone/PGR, glucocorticoid/NR3C1 and androgen/AR receptors transactivation, although at lower level; little effect on vitamin D receptor/VDR. Required for normal spermiogenesis. It probably plays a role in acrosome formation. The polypeptide is Coiled-coil domain-containing protein 62 (Ccdc62) (Mus musculus (Mouse)).